Here is a 175-residue protein sequence, read N- to C-terminus: MSTIAKDQTQINDKIRAKELRLIGQDGEQIGVKSKREALEMAERVDLDLVVVAPNAKPPVARIMDYGKFKFEQQKKEKEMKKKQKIINVKEIRLSPTIEEHDFQTKLKNGRKFLTKGDKCKVSIRFRGRAITHKEIGQRVLEKYADECKDIATVEQKPKMDGRQMFIMLAPTAEK.

This sequence belongs to the IF-3 family. As to quaternary structure, monomer.

It localises to the cytoplasm. Its function is as follows. IF-3 binds to the 30S ribosomal subunit and shifts the equilibrium between 70S ribosomes and their 50S and 30S subunits in favor of the free subunits, thus enhancing the availability of 30S subunits on which protein synthesis initiation begins. This Staphylococcus aureus (strain USA300) protein is Translation initiation factor IF-3.